Consider the following 450-residue polypeptide: Zinc finger protein 446 (450 aa).

An SCAN box domain is found at R26–P108. Residue K130 forms a Glycyl lysine isopeptide (Lys-Gly) (interchain with G-Cter in SUMO2) linkage. Disordered stretches follow at residues K130 to R155 and E168 to P205. S137 carries the phosphoserine modification. Residues I208–M254 form the KRAB domain. S218 carries the post-translational modification Phosphoserine. Disordered stretches follow at residues R263–P331 and H354–L389. Positions P275 to P286 are enriched in pro residues. Over residues G287–P306 the composition is skewed to low complexity. Position 308 is a phosphothreonine (T308). K330 is covalently cross-linked (Glycyl lysine isopeptide (Lys-Gly) (interchain with G-Cter in SUMO2)). 3 consecutive C2H2-type zinc fingers follow at residues Y332–G359, Y395–R422, and H423–P450.

This sequence belongs to the krueppel C2H2-type zinc-finger protein family.

It is found in the nucleus. Functionally, may be involved in transcriptional regulation. The polypeptide is Zinc finger protein 446 (ZNF446) (Homo sapiens (Human)).